A 255-amino-acid chain; its full sequence is Type III pantothenate kinase (255 aa).

An ATP-binding site is contributed by 6 to 13 (DIGNTNIV). Residue 107–110 (GSDC) participates in substrate binding. Asp109 functions as the Proton acceptor in the catalytic mechanism. Asp129 contributes to the K(+) binding site. Position 132 (Thr132) interacts with ATP. Thr184 is a binding site for substrate.

Belongs to the type III pantothenate kinase family. In terms of assembly, homodimer. NH4(+) is required as a cofactor. It depends on K(+) as a cofactor.

Its subcellular location is the cytoplasm. The catalysed reaction is (R)-pantothenate + ATP = (R)-4'-phosphopantothenate + ADP + H(+). Its pathway is cofactor biosynthesis; coenzyme A biosynthesis; CoA from (R)-pantothenate: step 1/5. Functionally, catalyzes the phosphorylation of pantothenate (Pan), the first step in CoA biosynthesis. The sequence is that of Type III pantothenate kinase from Bifidobacterium longum subsp. infantis (strain ATCC 15697 / DSM 20088 / JCM 1222 / NCTC 11817 / S12).